The primary structure comprises 453 residues: Prenyltransferase nscD (453 aa).

Residues Arg118, Lys200, Tyr202, Lys271, Tyr273, and Tyr428 each coordinate dimethylallyl diphosphate.

It belongs to the tryptophan dimethylallyltransferase family.

Its pathway is secondary metabolite biosynthesis. Prenyltransferase; part of the gene cluster that mediates the biosynthesis of neosartoricin, a prenylated anthracenone that exhibits T-cell antiproliferative activity, suggestive of a physiological role as an immunosuppressive agent. The non-reducing polyketide synthase nscA probably synthesizes and cyclizes the decaketide backbone. The hydrolase nscB then mediates the product release through hydrolysis followed by spontaneous decarboxylation. The prenyltransferase nscD catalyzes the addition of the dimethylallyl group to the aromatic C5. The FAD-dependent monooxygenase nscC is then responsible for the stereospecific hydroxylation at C2. There is no gene encoding O-acetyltransferase in the nsc gene cluster; thus, the last step of 2-O-acetylation leading to neosartoricin may be catalyzed by an unidentified O-acetyltransferase. This is Prenyltransferase nscD from Aspergillus fumigatus (strain ATCC MYA-4609 / CBS 101355 / FGSC A1100 / Af293) (Neosartorya fumigata).